A 160-amino-acid polypeptide reads, in one-letter code: Ribosomal RNA large subunit methyltransferase H (160 aa).

S-adenosyl-L-methionine contacts are provided by residues leucine 76, glycine 108, and 127 to 132 (FGFMTW).

The protein belongs to the RNA methyltransferase RlmH family. As to quaternary structure, homodimer.

It is found in the cytoplasm. It carries out the reaction pseudouridine(1915) in 23S rRNA + S-adenosyl-L-methionine = N(3)-methylpseudouridine(1915) in 23S rRNA + S-adenosyl-L-homocysteine + H(+). Specifically methylates the pseudouridine at position 1915 (m3Psi1915) in 23S rRNA. The protein is Ribosomal RNA large subunit methyltransferase H of Bartonella henselae (strain ATCC 49882 / DSM 28221 / CCUG 30454 / Houston 1) (Rochalimaea henselae).